The sequence spans 491 residues: Glutamyl-tRNA(Gln) amidotransferase subunit A (491 aa).

Active-site charge relay system residues include K77 and S152. S176 acts as the Acyl-ester intermediate in catalysis.

It belongs to the amidase family. GatA subfamily. Heterotrimer of A, B and C subunits.

It carries out the reaction L-glutamyl-tRNA(Gln) + L-glutamine + ATP + H2O = L-glutaminyl-tRNA(Gln) + L-glutamate + ADP + phosphate + H(+). Functionally, allows the formation of correctly charged Gln-tRNA(Gln) through the transamidation of misacylated Glu-tRNA(Gln) in organisms which lack glutaminyl-tRNA synthetase. The reaction takes place in the presence of glutamine and ATP through an activated gamma-phospho-Glu-tRNA(Gln). The polypeptide is Glutamyl-tRNA(Gln) amidotransferase subunit A (Chlamydia trachomatis serovar A (strain ATCC VR-571B / DSM 19440 / HAR-13)).